The chain runs to 222 residues: Probable transaldolase (222 aa).

Catalysis depends on Lys-91, which acts as the Schiff-base intermediate with substrate.

This sequence belongs to the transaldolase family. Type 3B subfamily.

The protein localises to the cytoplasm. It carries out the reaction D-sedoheptulose 7-phosphate + D-glyceraldehyde 3-phosphate = D-erythrose 4-phosphate + beta-D-fructose 6-phosphate. The protein operates within carbohydrate degradation; pentose phosphate pathway; D-glyceraldehyde 3-phosphate and beta-D-fructose 6-phosphate from D-ribose 5-phosphate and D-xylulose 5-phosphate (non-oxidative stage): step 2/3. Transaldolase is important for the balance of metabolites in the pentose-phosphate pathway. The chain is Probable transaldolase from Chlorobaculum tepidum (strain ATCC 49652 / DSM 12025 / NBRC 103806 / TLS) (Chlorobium tepidum).